Here is a 348-residue protein sequence, read N- to C-terminus: Alternative squalene epoxidase (348 aa).

Over residues 1-10 the composition is skewed to basic and acidic residues; that stretch reads MLVDRVENNE. Residues 1-26 form a disordered region; sequence MLVDRVENNEKQQQQMASSSDAMSDS. Residues 12 to 26 show a composition bias toward low complexity; sequence QQQQMASSSDAMSDS. 3 helical membrane-spanning segments follow: residues 55–75, 105–125, and 153–173; these read AIAW…LLLS, LGLV…WIFF, and GLLT…YLAI. A Fatty acid hydroxylase domain is found at 197-332; the sequence is FMCLVLQDGI…FMWFDQLGGT (136 aa). A Histidine box-1 motif is present at residues 211–215; sequence HVLEH. The Histidine box-2 signature appears at 226–230; the sequence is HKPHH. Helical transmembrane passes span 243 to 263 and 277 to 297; these read GSLM…ANLV and SYAC…DGIF. Positions 308–312 match the Histidine box-3 motif; sequence HHVHH.

Belongs to the sterol desaturase family. As to quaternary structure, interacts with cytochrome b5/PHATRDRAFT_30770. Fe cation is required as a cofactor.

It localises to the endoplasmic reticulum membrane. The enzyme catalyses squalene + 2 Fe(II)-[cytochrome b5] + O2 + 2 H(+) = (S)-2,3-epoxysqualene + 2 Fe(III)-[cytochrome b5] + H2O. It participates in terpene metabolism; lanosterol biosynthesis; lanosterol from farnesyl diphosphate. The activity of this enzyme is not inhibited by terbinafine, an established inhibitor of the conventional flavoprotein squalene epoxidase. Catalyzes the stereospecific epoxidation of squalene at the terminal double bond to form (S)-2,3-epoxysqualene, the first oxygenation step in sterol biosynthesis. This Phaeodactylum tricornutum (strain CCAP 1055/1) protein is Alternative squalene epoxidase.